A 132-amino-acid chain; its full sequence is NADH-quinone oxidoreductase subunit I 1 (132 aa).

4Fe-4S ferredoxin-type domains lie at 42 to 71 (LKVSHDKAKCVACYLCPTVCPAKCITVEAG) and 81 to 110 (ERYEIDMLRCIFCGYCVEACPVDALKMTGQ). [4Fe-4S] cluster is bound by residues Cys51, Cys54, Cys57, Cys61, Cys90, Cys93, Cys96, and Cys100.

The protein belongs to the complex I 23 kDa subunit family. As to quaternary structure, NDH-1 is composed of 14 different subunits. Subunits NuoA, H, J, K, L, M, N constitute the membrane sector of the complex. The cofactor is [4Fe-4S] cluster.

The protein localises to the cell inner membrane. The catalysed reaction is a quinone + NADH + 5 H(+)(in) = a quinol + NAD(+) + 4 H(+)(out). Its function is as follows. NDH-1 shuttles electrons from NADH, via FMN and iron-sulfur (Fe-S) centers, to quinones in the respiratory chain. The immediate electron acceptor for the enzyme in this species is believed to be ubiquinone. Couples the redox reaction to proton translocation (for every two electrons transferred, four hydrogen ions are translocated across the cytoplasmic membrane), and thus conserves the redox energy in a proton gradient. The sequence is that of NADH-quinone oxidoreductase subunit I 1 from Geobacter sulfurreducens (strain ATCC 51573 / DSM 12127 / PCA).